The primary structure comprises 297 residues: Light-independent protochlorophyllide reductase iron-sulfur ATP-binding protein (297 aa).

ATP-binding positions include 41-46 (GIGKST) and Lys70. Residue Ser45 participates in Mg(2+) binding. Residues Cys126 and Cys160 each coordinate [4Fe-4S] cluster. ATP contacts are provided by residues 211 to 212 (NR) and 235 to 237 (PDL).

It belongs to the NifH/BchL/ChlL family. Homodimer. Protochlorophyllide reductase is composed of three subunits; BchL, BchN and BchB. The cofactor is [4Fe-4S] cluster.

It carries out the reaction chlorophyllide a + oxidized 2[4Fe-4S]-[ferredoxin] + 2 ADP + 2 phosphate = protochlorophyllide a + reduced 2[4Fe-4S]-[ferredoxin] + 2 ATP + 2 H2O. The protein operates within porphyrin-containing compound metabolism; bacteriochlorophyll biosynthesis (light-independent). Component of the dark-operative protochlorophyllide reductase (DPOR) that uses Mg-ATP and reduced ferredoxin to reduce ring D of protochlorophyllide (Pchlide) to form chlorophyllide a (Chlide). This reaction is light-independent. The L component serves as a unique electron donor to the NB-component of the complex, and binds Mg-ATP. The protein is Light-independent protochlorophyllide reductase iron-sulfur ATP-binding protein of Methylorubrum extorquens (strain PA1) (Methylobacterium extorquens).